We begin with the raw amino-acid sequence, 319 residues long: Protein MGF 360-8L (319 aa).

It belongs to the asfivirus MGF 360 family.

Plays a role in virus cell tropism, and may be required for efficient virus replication in macrophages. This is Protein MGF 360-8L from Ornithodoros (relapsing fever ticks).